Here is a 151-residue protein sequence, read N- to C-terminus: uncharacterized protein (151 aa).

This is an uncharacterized protein from Bacillus subtilis (strain 168).